The following is a 336-amino-acid chain: DNA polymerase III subunit delta' (336 aa).

As to quaternary structure, DNA polymerase III contains a core (composed of alpha, epsilon and theta chains) that associates with a tau subunit. This core dimerizes to form the POLIII' complex. PolIII' associates with the gamma complex (composed of gamma, delta, delta', psi and chi chains) and with the beta chain to form the complete DNA polymerase III complex.

The enzyme catalyses DNA(n) + a 2'-deoxyribonucleoside 5'-triphosphate = DNA(n+1) + diphosphate. DNA polymerase III is a complex, multichain enzyme responsible for most of the replicative synthesis in bacteria. This DNA polymerase also exhibits 3' to 5' exonuclease activity. The protein is DNA polymerase III subunit delta' (holB) of Buchnera aphidicola subsp. Baizongia pistaciae (strain Bp).